We begin with the raw amino-acid sequence, 603 residues long: DNA mismatch repair protein MutL (603 aa).

This sequence belongs to the DNA mismatch repair MutL/HexB family.

This protein is involved in the repair of mismatches in DNA. It is required for dam-dependent methyl-directed DNA mismatch repair. May act as a 'molecular matchmaker', a protein that promotes the formation of a stable complex between two or more DNA-binding proteins in an ATP-dependent manner without itself being part of a final effector complex. This Listeria monocytogenes serotype 4a (strain HCC23) protein is DNA mismatch repair protein MutL.